Here is a 193-residue protein sequence, read N- to C-terminus: Flagellar transcriptional regulator FlhC (193 aa).

The Zn(2+) site is built by Cys-138, Cys-141, Cys-158, and Cys-161.

The protein belongs to the FlhC family. Heterohexamer composed of two FlhC and four FlhD subunits. Each FlhC binds a FlhD dimer, forming a heterotrimer, and a hexamer assembles by dimerization of two heterotrimers. The cofactor is Zn(2+).

It is found in the cytoplasm. Functions in complex with FlhD as a master transcriptional regulator that regulates transcription of several flagellar and non-flagellar operons by binding to their promoter region. Activates expression of class 2 flagellar genes, including fliA, which is a flagellum-specific sigma factor that turns on the class 3 genes. Also regulates genes whose products function in a variety of physiological pathways. This is Flagellar transcriptional regulator FlhC from Proteus mirabilis.